Here is a 427-residue protein sequence, read N- to C-terminus: Glutamate-1-semialdehyde 2,1-aminomutase (427 aa).

Lys267 is modified (N6-(pyridoxal phosphate)lysine).

It belongs to the class-III pyridoxal-phosphate-dependent aminotransferase family. HemL subfamily. In terms of assembly, homodimer. Pyridoxal 5'-phosphate serves as cofactor.

Its subcellular location is the cytoplasm. It carries out the reaction (S)-4-amino-5-oxopentanoate = 5-aminolevulinate. It functions in the pathway porphyrin-containing compound metabolism; protoporphyrin-IX biosynthesis; 5-aminolevulinate from L-glutamyl-tRNA(Glu): step 2/2. The sequence is that of Glutamate-1-semialdehyde 2,1-aminomutase from Syntrophotalea carbinolica (strain DSM 2380 / NBRC 103641 / GraBd1) (Pelobacter carbinolicus).